We begin with the raw amino-acid sequence, 74 residues long: U2-sicaritoxin-Sdo1a (74 aa).

An N-terminal signal peptide occupies residues 1–20; the sequence is MKLSFCFFLCAIVLFSFAEA. A propeptide spanning residues 21 to 39 is cleaved from the precursor; it reads RINPNQLKRLRELVRDDEP. 3 disulfides stabilise this stretch: Cys42–Cys59, Cys49–Cys62, and Cys58–Cys71.

In terms of tissue distribution, expressed by the venom gland.

Its subcellular location is the secreted. The sequence is that of U2-sicaritoxin-Sdo1a from Hexophthalma dolichocephala (Afrotropical spider).